A 277-amino-acid chain; its full sequence is NADPH-dependent 7-cyano-7-deazaguanine reductase (277 aa).

V83–S85 is a binding site for substrate. S85 to K86 provides a ligand contact to NADPH. The active-site Thioimide intermediate is C184. Catalysis depends on D191, which acts as the Proton donor. H223–E224 provides a ligand contact to substrate. An NADPH-binding site is contributed by R252–G253.

The protein belongs to the GTP cyclohydrolase I family. QueF type 2 subfamily. Homodimer.

The protein resides in the cytoplasm. The catalysed reaction is 7-aminomethyl-7-carbaguanine + 2 NADP(+) = 7-cyano-7-deazaguanine + 2 NADPH + 3 H(+). It participates in tRNA modification; tRNA-queuosine biosynthesis. Functionally, catalyzes the NADPH-dependent reduction of 7-cyano-7-deazaguanine (preQ0) to 7-aminomethyl-7-deazaguanine (preQ1). The protein is NADPH-dependent 7-cyano-7-deazaguanine reductase of Cupriavidus metallidurans (strain ATCC 43123 / DSM 2839 / NBRC 102507 / CH34) (Ralstonia metallidurans).